The sequence spans 223 residues: MLWVQRKRRRKETSECPSDKDKSPESHKAKNESWIKSHFSRLSEEKLALDNNASASGNATQTESGSEEVSSTVHIETFTTRHGEVGSALHRESFTSRQKTSGPSVIQEIHQESGKAPSTDEATWAAVAACTKEIDTQGRHLAHSMLQRAIAYQHSGHLESKDINQEELRALEEVEMKLQKNFLTQRENTIAGANHTHTFYGHSHHSHHGHPSHQSHSLPNRRH.

The span at 1-11 shows a compositional bias: basic residues; the sequence is MLWVQRKRRRK. A disordered region spans residues 1-37; sequence MLWVQRKRRRKETSECPSDKDKSPESHKAKNESWIKS. Residues 12 to 37 are compositionally biased toward basic and acidic residues; sequence ETSECPSDKDKSPESHKAKNESWIKS. A Phosphoserine modification is found at S43. Disordered regions lie at residues 49–73 and 196–223; these read LDNN…SSTV and THTF…NRRH. Over residues 51–61 the composition is skewed to polar residues; it reads NNASASGNATQ. Over residues 62–73 the composition is skewed to low complexity; that stretch reads TESGSEEVSSTV. Residues 202-223 are compositionally biased toward basic residues; it reads HSHHSHHGHPSHQSHSLPNRRH.

This is an uncharacterized protein from Homo sapiens (Human).